Reading from the N-terminus, the 1397-residue chain is DNA-directed RNA polymerase subunit beta (1397 aa).

The protein belongs to the RNA polymerase beta chain family. As to quaternary structure, the RNAP catalytic core consists of 2 alpha, 1 beta, 1 beta' and 1 omega subunit. When a sigma factor is associated with the core the holoenzyme is formed, which can initiate transcription.

It carries out the reaction RNA(n) + a ribonucleoside 5'-triphosphate = RNA(n+1) + diphosphate. In terms of biological role, DNA-dependent RNA polymerase catalyzes the transcription of DNA into RNA using the four ribonucleoside triphosphates as substrates. In Rhodospirillum centenum (strain ATCC 51521 / SW), this protein is DNA-directed RNA polymerase subunit beta.